Consider the following 232-residue polypeptide: DnaJ homolog subfamily B member 8 (232 aa).

Positions 3-69 constitute a J domain; that stretch reads NYYEVLGVQA…KKRSLYDRAG (67 aa).

Interacts with histone deacetylases HDAC4, HDAC6, and SIRT2, HDAC activity is required for antiaggregation.

Functionally, efficient suppressor of aggregation and toxicity of disease-associated polyglutamine proteins. The sequence is that of DnaJ homolog subfamily B member 8 (DNAJB8) from Homo sapiens (Human).